Consider the following 422-residue polypeptide: Probable glycosidase CRR1 (422 aa).

Positions 1 to 20 (MRISILQLVPVVGYIGFALG) are cleaved as a signal peptide. Positions 67–339 (DEESCAPIPA…WENSPDIIEK (273 aa)) constitute a GH16 domain. Glu217 acts as the Nucleophile in catalysis. Residue Glu221 is the Proton donor of the active site.

It belongs to the glycosyl hydrolase 16 family. CRR1 subfamily.

It is found in the spore wall. Functionally, spore specific glycosidase involved in spore wall assembly during sporulation. May be involved in copper import. This chain is Probable glycosidase CRR1 (CRR1), found in Saccharomyces cerevisiae (strain ATCC 204508 / S288c) (Baker's yeast).